A 325-amino-acid polypeptide reads, in one-letter code: Hydroxymethylglutaryl-CoA lyase, mitochondrial (325 aa).

Residues 1–27 (MASVRKAFPRRLVGLTSLRAVSTSSMG) constitute a mitochondrion transit peptide. Residues 33–300 (VKIVEVGPRD…HTGVNLQKLL (268 aa)) form the Pyruvate carboxyltransferase domain. A substrate-binding site is contributed by R41. Residue D42 participates in a divalent metal cation binding. K48 is subject to N6-acetyllysine; alternate. K48 is subject to N6-succinyllysine; alternate. Residue K111 is modified to N6-acetyllysine. N6-acetyllysine; alternate is present on residues K137 and K179. Residues K137 and K179 each carry the N6-succinyllysine; alternate modification. H233 and H235 together coordinate a divalent metal cation. The active site involves C266. N275 contributes to the a divalent metal cation binding site. The Microbody targeting signal signature appears at 323 to 325 (CKL). Residue K324 is modified to N6-acetyllysine.

This sequence belongs to the HMG-CoA lyase family. Homodimer; disulfide-linked. Can also form homotetramers.

The protein resides in the mitochondrion matrix. The protein localises to the peroxisome. It catalyses the reaction (3S)-3-hydroxy-3-methylglutaryl-CoA = acetoacetate + acetyl-CoA. The protein operates within metabolic intermediate metabolism; (S)-3-hydroxy-3-methylglutaryl-CoA degradation; acetoacetate from (S)-3-hydroxy-3-methylglutaryl-CoA: step 1/1. Mitochondrial 3-hydroxy-3-methylglutaryl-CoA lyase that catalyzes a cation-dependent cleavage of (S)-3-hydroxy-3-methylglutaryl-CoA into acetyl-CoA and acetoacetate, a key step in ketogenesis. Terminal step in leucine catabolism. Ketone bodies (beta-hydroxybutyrate, acetoacetate and acetone) are essential as an alternative source of energy to glucose, as lipid precursors and as regulators of metabolism. The chain is Hydroxymethylglutaryl-CoA lyase, mitochondrial (Hmgcl) from Mus musculus (Mouse).